The sequence spans 95 residues: Cerebratulus toxin A-III (95 aa).

Disulfide bonds link Cys-17–Cys-38, Cys-23–Cys-34, and Cys-48–Cys-61.

The protein belongs to the worm cytolysin family.

It localises to the secreted. Its function is as follows. Permeabilizes a variety of cells. Forms large pores which allows the release of large proteins almost as rapidly as small organic molecules and inorganic ions. At sublytic concentrations, the toxin also inhibits protein kinase C and endogenous voltage-gated cation selective (sodium, calcium) channels occurring in the nervous and cardiovascular systems. The chain is Cerebratulus toxin A-III from Cerebratulus lacteus (Milky ribbon worm).